The chain runs to 206 residues: MLHLKEKLKGTTTVGLVCKEGVVLAADTRASLGNIIYAKNVTKIHKIDEHLAIAGAGDVGDILNLVRLLKAEANLYKSTVGKEMSVKALATLLANILNGSKYFPYLGWFLVGGYDEKPRLFSVDMVGGITEDNYAAAGSGMEFAYSILDSEYREEMSVNDGIKLAVKAINVAIKRDVFTGDGLLVVTITKDGYKEYRGAELEKMLK.

The propeptide at 1-10 (MLHLKEKLKG) is removed in mature form; by autocatalysis. The active-site Nucleophile is the threonine 11.

Belongs to the peptidase T1B family. As to quaternary structure, the 20S proteasome core is composed of 14 alpha and 14 beta subunits that assemble into four stacked heptameric rings, resulting in a barrel-shaped structure. The two inner rings, each composed of seven catalytic beta subunits, are sandwiched by two outer rings, each composed of seven alpha subunits. The catalytic chamber with the active sites is on the inside of the barrel. Has a gated structure, the ends of the cylinder being occluded by the N-termini of the alpha-subunits. Is capped at one or both ends by the proteasome regulatory ATPase, PAN.

The protein resides in the cytoplasm. The catalysed reaction is Cleavage of peptide bonds with very broad specificity.. With respect to regulation, the formation of the proteasomal ATPase PAN-20S proteasome complex, via the docking of the C-termini of PAN into the intersubunit pockets in the alpha-rings, triggers opening of the gate for substrate entry. Interconversion between the open-gate and close-gate conformations leads to a dynamic regulation of the 20S proteasome proteolysis activity. Component of the proteasome core, a large protease complex with broad specificity involved in protein degradation. The polypeptide is Proteasome subunit beta 2 (Pyrococcus furiosus (strain ATCC 43587 / DSM 3638 / JCM 8422 / Vc1)).